We begin with the raw amino-acid sequence, 765 residues long: MPRSPGTRLKPAKYIPVATAAALLVGSSTLFFVFTCPWLTRAVSPAVPVYNGIIFLFVLANFSMATFMDPGVFPRADEDEDKEDDFRAPLYKNVDVRGIQVRMKWCATCHFYRPPRCSHCSVCDNCVEDFDHHCPWVNNCIGRRNYRYFFLFLLSLSAHMVGVVAFGLVYVLNHAEGLGAAHTTITMAVMCVAGLFFIPVIGLTGFHVVLVTRGRTTNEQVTGKFRGGVNPFTRGCCGNVEHVLCSPLAPRYVVEPPRLPLAVSLKPPFLRPELLDRAAPLKVKLSDNGLKAGLGRSKSKGSLDRLDEKPLDLGPPLPPKIEAGTFSSDLQTPRPGSAESALSVQRTSPPTPAMYKFRPAFPTGPKVPFCGPGEQVPGPDSLTLGDDSIRSLDFVSEPSLDLPDYGPGGLHAAYPPSPPLSASDAFSGALRSLSLKASSRRGGDHVALQPLRSEGGPPTPHRSIFAPHALPNRNGSLSYDSLLNPGSPGGHACPAHPAVGMAGYHSPYLHPGATGDPPRPLPRSFSPVLGPRPREPSPVRYDNLSRTIMASIQERKDREERERLLRSQADSLFGDSGVYDAPSSYSLQQASVLSEGPRGPALRYGSRDDLVAGPGFGGARNPALQTSLSSLSSSVSRAPRTSSSSLQADQASSNAPGPRPSSGSHRSPARQGLPSPPGTPHLTILRGPQSCRLHPHGPPRATALADRAEDHPQLKTPPSKLNGQSPGLARLGLATGPPGPSASPTRHTLVKKVSGVGGTTYEISV.

Over 1 to 13 the chain is Cytoplasmic; sequence MPRSPGTRLKPAK. A helical transmembrane segment spans residues 14 to 34; sequence YIPVATAAALLVGSSTLFFVF. Topologically, residues 35–52 are lumenal; that stretch reads TCPWLTRAVSPAVPVYNG. Residues 53–73 form a helical membrane-spanning segment; it reads IIFLFVLANFSMATFMDPGVF. Over 74–148 the chain is Cytoplasmic; sequence PRADEDEDKE…NCIGRRNYRY (75 aa). Residues 104–154 form the DHHC domain; sequence KWCATCHFYRPPRCSHCSVCDNCVEDFDHHCPWVNNCIGRRNYRYFFLFLL. Catalysis depends on Cys134, which acts as the S-palmitoyl cysteine intermediate. Residues 149 to 169 form a helical membrane-spanning segment; that stretch reads FFLFLLSLSAHMVGVVAFGLV. Over 170-190 the chain is Lumenal; the sequence is YVLNHAEGLGAAHTTITMAVM. A helical membrane pass occupies residues 191–211; the sequence is CVAGLFFIPVIGLTGFHVVLV. Over 212–765 the chain is Cytoplasmic; that stretch reads TRGRTTNEQV…VGGTTYEISV (554 aa). The disordered stretch occupies residues 293–352; sequence GLGRSKSKGSLDRLDEKPLDLGPPLPPKIEAGTFSSDLQTPRPGSAESALSVQRTSPPTP. Positions 301 to 311 are enriched in basic and acidic residues; it reads GSLDRLDEKPL. Phosphoserine is present on Ser337. Arg441 carries the post-translational modification Omega-N-methylarginine. The segment at 509–540 is disordered; it reads LHPGATGDPPRPLPRSFSPVLGPRPREPSPVR. Phosphoserine occurs at positions 606, 627, 675, 725, and 743. Residues 613–746 form a disordered region; it reads GPGFGGARNP…PPGPSASPTR (134 aa). A compositionally biased stretch (low complexity) spans 622 to 653; it reads PALQTSLSSLSSSVSRAPRTSSSSLQADQASS.

It belongs to the DHHC palmitoyltransferase family. ERF2/ZDHHC9 subfamily.

The protein resides in the golgi apparatus membrane. Its subcellular location is the mitochondrion membrane. It catalyses the reaction L-cysteinyl-[protein] + hexadecanoyl-CoA = S-hexadecanoyl-L-cysteinyl-[protein] + CoA. Its function is as follows. Palmitoyltransferase that catalyzes the addition of palmitate onto various protein substrates and therefore functions in several unrelated biological processes. Through the palmitoylation of ABCA1 regulates the localization of the transporter to the plasma membrane and thereby regulates its function in cholesterol and phospholipid efflux. Could also pamitoylate the D(2) dopamine receptor DRD2 and regulate its stability and localization to the plasma membrane. Could also play a role in glutamatergic transmission. The protein is Palmitoyltransferase ZDHHC8 of Pan troglodytes (Chimpanzee).